Here is a 383-residue protein sequence, read N- to C-terminus: Cytochrome b (383 aa).

Helical transmembrane passes span 34–54 (FGSL…FLMM), 78–99 (WLIR…FLHI), 114–134 (WNVG…GYVL), and 179–199 (FTAL…THLI). Heme b contacts are provided by His-84 and His-98. The heme b site is built by His-183 and His-197. His-202 serves as a coordination point for a ubiquinone. 4 consecutive transmembrane segments (helical) span residues 227 to 247 (MKDV…ALYL), 289 to 309 (LGGV…PFLH), 321 to 341 (LSQL…WIGG), and 348 to 368 (YILL…ILMP).

This sequence belongs to the cytochrome b family. In terms of assembly, the cytochrome bc1 complex contains 3 respiratory subunits (MT-CYB, CYC1 and UQCRFS1), 2 core proteins (UQCRC1 and UQCRC2) and probably 6 low-molecular weight proteins. The cofactor is heme b.

The protein resides in the mitochondrion inner membrane. Its function is as follows. Component of the ubiquinol-cytochrome c reductase complex (complex III or cytochrome b-c1 complex) that is part of the mitochondrial respiratory chain. The b-c1 complex mediates electron transfer from ubiquinol to cytochrome c. Contributes to the generation of a proton gradient across the mitochondrial membrane that is then used for ATP synthesis. This is Cytochrome b (MT-CYB) from Caiman crocodilus (Spectacled caiman).